The primary structure comprises 190 residues: GTP cyclohydrolase 1 (190 aa).

Zn(2+) is bound by residues C80, H83, and C151.

Belongs to the GTP cyclohydrolase I family. Toroid-shaped homodecamer, composed of two pentamers of five dimers.

It carries out the reaction GTP + H2O = 7,8-dihydroneopterin 3'-triphosphate + formate + H(+). The protein operates within cofactor biosynthesis; 7,8-dihydroneopterin triphosphate biosynthesis; 7,8-dihydroneopterin triphosphate from GTP: step 1/1. In Rickettsia prowazekii (strain Madrid E), this protein is GTP cyclohydrolase 1 (folE).